Consider the following 650-residue polypeptide: MADSGNWEGRCTGWFNVEAIVERKTGDPIPEDENYDGGDTDESEMGDFIDNAHIPNIYAQQEIAQALYQSQQANADNEAIRVLKRKFTGSPGGSPDMKRDEFIDKQLSPQINVLSISSGRSTSKRRLFEEQDSGYGNTEVETYETEVPGLGAGVGCLQNVNEEGNQIVSPRESSSGSSSISNMDIETESTPITDITNLLQRNNAKAALLAKFKEVYGLSYMELVRPYKSDKTHCQDWVCAVFGVIPSLAESLKSLLTQYCMYIHLQCLTCTWGIIVLVLVRFKCNKNRLTVQKLLSSLLNVTQERMLIEPPRLRSTPCALYWYRTSLSNISEIVGDTPEWIKRQTLVQHSLDDSQFDLSQMIQWAFDNDITDDCEIAYKYALLGNVDSNAAAFLKSNAQAKYVKDCGTMCRHYKAAERKQMSMAQWIQHRCDLTNDGGNWKDIVLFLRYQNVEFMPFLITLKQFLKGIPKQNCIVLYGPPDTGKSHFGMSLIKFIQGVVISYVNSTSHFWLSPLADAKMALLDDATPGCWTYIDKYLRNALDGNPICLDRKHKNLLQVKCPPLLITSNTNPKADDTWKYLHSRIKVFTFLNPFPFDSNGNPLYQLTNENWKAFFTKTWSKLDLTEDDDKENDGDTVQTFKCVSGRNPRTV.

Positions 84–86 (KRK) match the Nuclear localization signal motif. Phosphoserine; by host occurs at positions 90, 94, 108, and 121. The Nuclear export signal motif lies at 107 to 116 (LSPQINVLSI). Residues 187-353 (TESTPITDIT…QTLVQHSLDD (167 aa)) form a DNA-binding region region. The SF3 helicase domain maps to 452–602 (VEFMPFLITL…FPFDSNGNPL (151 aa)). 478–485 (GPPDTGKS) contacts ATP. Lysine 559 is covalently cross-linked (Glycyl lysine isopeptide (Lys-Gly) (interchain with G-Cter in SUMO)).

This sequence belongs to the papillomaviridae E1 protein family. As to quaternary structure, can form hexamers. Interacts with E2 protein; this interaction increases E1 DNA binding specificity. Interacts with host DNA polymerase subunit POLA2. Interacts with host single stranded DNA-binding protein RPA1. Interacts with host TOP1; this interaction stimulates the enzymatic activity of TOP1. Post-translationally, phosphorylated. Sumoylated.

It is found in the host nucleus. It carries out the reaction Couples ATP hydrolysis with the unwinding of duplex DNA by translocating in the 3'-5' direction.. The enzyme catalyses ATP + H2O = ADP + phosphate + H(+). Functionally, ATP-dependent DNA 3'-5' helicase required for initiation of viral DNA replication. It forms a complex with the viral E2 protein. The E1-E2 complex binds to the replication origin which contains binding sites for both proteins. During the initial step, a dimer of E1 interacts with a dimer of protein E2 leading to a complex that binds the viral origin of replication with high specificity. Then, a second dimer of E1 displaces the E2 dimer in an ATP-dependent manner to form the E1 tetramer. Following this, two E1 monomers are added to each half of the site, which results in the formation of two E1 trimers on the viral ori. Subsequently, two hexamers will be created. The double hexamer acts as a bi-directional helicase machinery and unwinds the viral DNA and then recruits the host DNA polymerase to start replication. The sequence is that of Replication protein E1 from Homo sapiens (Human).